A 358-amino-acid polypeptide reads, in one-letter code: tRNA-specific 2-thiouridylase MnmA (358 aa).

Residues 7 to 14 (AMSGGVDS) and M33 each bind ATP. Residue C102 is the Nucleophile of the active site. The cysteines at positions 102 and 199 are disulfide-linked. ATP is bound at residue G126. An interaction with tRNA region spans residues 149–151 (KDQ). Catalysis depends on C199, which acts as the Cysteine persulfide intermediate. The segment at 305 to 306 (RY) is interaction with tRNA.

Belongs to the MnmA/TRMU family.

Its subcellular location is the cytoplasm. It carries out the reaction S-sulfanyl-L-cysteinyl-[protein] + uridine(34) in tRNA + AH2 + ATP = 2-thiouridine(34) in tRNA + L-cysteinyl-[protein] + A + AMP + diphosphate + H(+). In terms of biological role, catalyzes the 2-thiolation of uridine at the wobble position (U34) of tRNA, leading to the formation of s(2)U34. The chain is tRNA-specific 2-thiouridylase MnmA from Halothermothrix orenii (strain H 168 / OCM 544 / DSM 9562).